The primary structure comprises 327 residues: MCHQKLTISWFAVVLLASPLMAIWELEKDVYVVEVDWSPDAAGERVVLTCDTSEEDDIIWTSDKNSEAVGSGKTLTIQVKEFSNAGQYTCHKGGKTLSHSRLLLHKKENGIWSTDILKDQKDPKNKTFLKCEAANYSGRFTCWWLTAISTDLKFNVKSSSSSSDSRAVTCGAASLSAEKVTVDRKDYQKYSVACQEDITCPTAEETLPIGLVMEAQHKYKYENYSTGFFIRDIIKPDPPKNLQLKPLRGSQMELSWEYPDSWSTPHSYFSLKFHVQVHRKRERKDESQFVDKTSATIRCSKGAEVRVRAQDHYYNSSWSRWVSVPCS.

The signal sequence occupies residues 1–22; the sequence is MCHQKLTISWFAVVLLASPLMA. The 84-residue stretch at 23 to 106 folds into the Ig-like C2-type domain; sequence IWELEKDVYV…LSHSRLLLHK (84 aa). Cys-50 and Cys-90 form a disulfide bridge. N-linked (GlcNAc...) asparagine glycans are attached at residues Asn-125, Asn-135, Asn-223, and Asn-315. The Fibronectin type-III domain occupies 238–327; sequence PPKNLQLKPL…WSRWVSVPCS (90 aa).

Belongs to the IL-12B family. As to quaternary structure, heterodimer with IL12A; disulfide-linked. The heterodimer is known as interleukin IL-12. Heterodimer with IL23A; disulfide-linked. The heterodimer is known as interleukin IL-23. Also secreted as a monomer. Interacts with NBR1; this interaction promotes IL-12 secretion.

The protein resides in the secreted. Functionally, cytokine that can act as a growth factor for activated T and NK cells, enhance the lytic activity of NK/lymphokine-activated killer cells, and stimulate the production of IFN-gamma by resting PBMC. In terms of biological role, associates with IL23A to form the IL-23 interleukin, a heterodimeric cytokine which functions in innate and adaptive immunity. IL-23 may constitute with IL-17 an acute response to infection in peripheral tissues. IL-23 binds to a heterodimeric receptor complex composed of IL12RB1 and IL23R, activates the Jak-Stat signaling cascade, stimulates memory rather than naive T-cells and promotes production of pro-inflammatory cytokines. IL-23 induces autoimmune inflammation and thus may be responsible for autoimmune inflammatory diseases and may be important for tumorigenesis. The protein is Interleukin-12 subunit beta (IL12B) of Mesocricetus auratus (Golden hamster).